The following is a 344-amino-acid chain: Anthranilate phosphoribosyltransferase 2 (344 aa).

5-phospho-alpha-D-ribose 1-diphosphate contacts are provided by residues Gly81, 84 to 85 (GD), Thr89, 91 to 94 (NIST), 109 to 117 (KHGNRALSS), and Ala121. Gly81 is an anthranilate binding site. A Mg(2+)-binding site is contributed by Ser93. Asn112 lines the anthranilate pocket. Anthranilate is bound at residue Arg167. Residues Asp226 and Glu227 each coordinate Mg(2+).

Belongs to the anthranilate phosphoribosyltransferase family. Homodimer. Mg(2+) is required as a cofactor.

The enzyme catalyses N-(5-phospho-beta-D-ribosyl)anthranilate + diphosphate = 5-phospho-alpha-D-ribose 1-diphosphate + anthranilate. Its pathway is amino-acid biosynthesis; L-tryptophan biosynthesis; L-tryptophan from chorismate: step 2/5. Its function is as follows. Catalyzes the transfer of the phosphoribosyl group of 5-phosphorylribose-1-pyrophosphate (PRPP) to anthranilate to yield N-(5'-phosphoribosyl)-anthranilate (PRA). This Ralstonia nicotianae (strain ATCC BAA-1114 / GMI1000) (Ralstonia solanacearum) protein is Anthranilate phosphoribosyltransferase 2.